Reading from the N-terminus, the 1356-residue chain is MLSFVDNRILLLLAVTSLLASCQSGGLKGPRGAKGPRGDRGPQGPNGRDGKAGLPGIAGPPGPPGLGGNFAAQFDGGKGSDPGPGPMGLMGSRGPNGPPGAPGPQGFTGHAGEPGEPGQTGSIGARGPTGSAGKPGEDGNNGRPGKPGDRGGPGTQGARGFPGTPGLPGMKGHRGYNGLDGRKGESGTAGAKGETGAHGANGSPGPAGSRGLNGERGRAGPAGPAGARGADGSTGPAGPAGPLGAAGPPGFPGAPGPKGEIGGAGSNGPSGPQGGRGEPGINGAVGPVGPVGNPGNNGINGAKGAAGLPGVAGAPGFPGPRGGPGPQGPQGSTGARGLGGDPGPSGQKGDSGAKGEPGHSGVQGAAGPAGEEGKRGSTGEVGATGPAGLRGARGGAGTRGLPGLEGRGGPIGMPGARGATGPGGIRGAPGDAGRAGESGLTGARGLPGNSGQGGPPGKEGPPGAAGLDGRTGPPGPTGPRGQPGNIGFPGPKGPGGEAGKGGDKGPTGATGLRGGPGADGNNGAPGPAGVVGNTGEKGEQGPAGAPGFQGLPGPAGPAGEAGKAGNQGMPGDQGLPGPAGVKGERGNSGPAGSAGSQGAIGARGPAGTPGPDGGKGEPGSVGIVGAAGHQGPGGMPGERGAGGTPGPKGEKGEGGHRGLEGNMGRDGARGGPGPSGPPGPSGANGEKGESGSFGPAGPAGLRGPSGERGEGGPAGLPGFAGPPGSDGQSGPRGEKGPAGGKGDVGPAGPAGPSGQSGPSGASGPAGPPGGRGDAGPSGLTGFPGAAGRVGGPGPAGIAGPPGSAGPAGKDGPRGLRGDPGPGGPQGEQGVVGPAGISGDKGPSGESGPPGAPGTAGPQGVLGPSGFVGLPGSRGDKGLPGGPGAVGEPGRLGPAGASGPRGPAGNIGMPGMTGTQGEAGREGNSGNDGPPGRPGAAGFKGDRGEPGSPGALGSSGQPGPNGPAGSAGRPGNRGESGPTGNGGPVGAVGARGAPGPAGPRGEKGGAGEKGDRGMKGLRGHGGLQGMPGPNGPSGETGSAGITGPAGPRGPAGPHGPPGKDGRAGGHGAIGPVGHRGSPGHLGPAGPPGSPGLPGPAGPAGGGYDQSGGYDEYRADQPSFRAKDYEVDATIKSLNSQIENLLTPEGSKKNPARTCRDIRLSHPDWSSGFYWIDPNQGCIADAIKAYCDFSTGHTCIHPHPESIARKNWYRSSENKKHVWFGETINGGTEFAYNDETLSPQSMATQLAFMRLLANQATQNITYHCKNSVAYMDGENGNLKKAVLLQGSNDVELRAEGNSRFTFNVLEDGCTRHTGQWSKTVIEYRTNKPSRLPILDIAPLDIGEADQEFGLDIGPVCFK.

The first 22 residues, 1 to 22 (MLSFVDNRILLLLAVTSLLASC), serve as a signal peptide directing secretion. The interval 22 to 1112 (CQSGGLKGPR…DQSGGYDEYR (1091 aa)) is disordered. Residues Gln-23 and Gln-73 each carry the pyrrolidone carboxylic acid modification. The propeptide at 23–72 (QSGGLKGPRGAKGPRGDRGPQGPNGRDGKAGLPGIAGPPGPPGLGGNFAA) is N-terminal propeptide. Positions 76–88 (GGKGSDPGPGPMG) are enriched in gly residues. Lys-78 is subject to Allysine. Lys-171 bears the 5-hydroxylysine; alternate mark. Lys-171 carries O-linked (Gal...) hydroxylysine; alternate glycosylation. Low complexity predominate over residues 219-248 (AGPAGPAGARGADGSTGPAGPAGPLGAAGP). Residues 259–280 (GEIGGAGSNGPSGPQGGRGEPG) are compositionally biased toward gly residues. A compositionally biased stretch (low complexity) spans 281 to 315 (INGAVGPVGPVGNPGNNGINGAKGAAGLPGVAGAP). Pro residues predominate over residues 317–327 (FPGPRGGPGPQ). 4 stretches are compositionally biased toward gly residues: residues 334–343 (GARGLGGDPG), 391–412 (GARGGAGTRGLPGLEGRGGPIG), 418–427 (GATGPGGIRG), and 448–457 (GNSGQGGPPG). Positions 479–489 (PRGQPGNIGFP) are enriched in low complexity. Over residues 511 to 520 (GLRGGPGADG) the composition is skewed to gly residues. Low complexity-rich tracts occupy residues 521–564 (NNGA…AGKA) and 587–603 (NSGPAGSAGSQGAIGAR). 2 stretches are compositionally biased toward gly residues: residues 610 to 619 (GPDGGKGEPG) and 628 to 646 (GHQGPGGMPGERGAGGTPG). The segment covering 648-659 (KGEKGEGGHRGL) has biased composition (basic and acidic residues). A compositionally biased stretch (low complexity) spans 716 to 731 (LPGFAGPPGSDGQSGP). The segment covering 736 to 745 (GPAGGKGDVG) has biased composition (gly residues). 2 stretches are compositionally biased toward low complexity: residues 746 to 764 (PAGPAGPSGQSGPSGASGP) and 776 to 786 (PSGLTGFPGAA). Gly residues predominate over residues 787-796 (GRVGGPGPAG). Low complexity predominate over residues 797–809 (IAGPPGSAGPAGK). Over residues 817-826 (GDPGPGGPQG) the composition is skewed to gly residues. The span at 827-858 (EQGVVGPAGISGDKGPSGESGPPGAPGTAGPQ) shows a compositional bias: low complexity. The segment covering 877 to 886 (GLPGGPGAVG) has biased composition (gly residues). Over residues 888-903 (PGRLGPAGASGPRGPA) the composition is skewed to low complexity. Gly residues predominate over residues 976–985 (GPTGNGGPVG). Over residues 999-1013 (RGEKGGAGEKGDRGM) the composition is skewed to basic and acidic residues. The span at 1083 to 1095 (AGPPGSPGLPGPA) shows a compositional bias: pro residues. Positions 1114-1356 (DQPSFRAKDY…GLDIGPVCFK (243 aa)) are cleaved as a propeptide — C-terminal propeptide. Residues 1123–1356 (YEVDATIKSL…GLDIGPVCFK (234 aa)) form the Fibrillar collagen NC1 domain. 3 disulfides stabilise this stretch: Cys-1153/Cys-1185, Cys-1193/Cys-1354, and Cys-1262/Cys-1307. Ca(2+) contacts are provided by Asp-1171, Asn-1173, Gln-1174, Cys-1176, and Asp-1179. N-linked (GlcNAc...) asparagine glycosylation is present at Asn-1257.

This sequence belongs to the fibrillar collagen family. As to quaternary structure, trimers of one alpha 2(I) and two alpha 1(I) chains. Prolines at the third position of the tripeptide repeating unit (G-X-Y) are hydroxylated in some or all of the chains. In terms of tissue distribution, forms the fibrils of tendon, ligaments and bones. In bones the fibrils are mineralized with calcium hydroxyapatite.

The protein resides in the secreted. The protein localises to the extracellular space. It is found in the extracellular matrix. Type I collagen is a member of group I collagen (fibrillar forming collagen). The sequence is that of Collagen alpha-2(I) chain (col1a2) from Oncorhynchus mykiss (Rainbow trout).